Reading from the N-terminus, the 337-residue chain is Holliday junction branch migration complex subunit RuvB (337 aa).

Positions 1 to 180 (MTRLISADKS…FGVISRLEFY (180 aa)) are large ATPase domain (RuvB-L). Residues Leu19, Arg20, Gly61, Lys64, Thr65, Thr66, 127–129 (EDF), Arg170, Tyr180, and Arg217 contribute to the ATP site. Position 65 (Thr65) interacts with Mg(2+). Residues 181 to 251 (THDELAFIIT…VADQALALLE (71 aa)) form a small ATPAse domain (RuvB-S) region. Positions 254 to 337 (EMGFDMMDRA…APEPPQGKLF (84 aa)) are head domain (RuvB-H). 2 residues coordinate DNA: Arg309 and Arg314.

The protein belongs to the RuvB family. Homohexamer. Forms an RuvA(8)-RuvB(12)-Holliday junction (HJ) complex. HJ DNA is sandwiched between 2 RuvA tetramers; dsDNA enters through RuvA and exits via RuvB. An RuvB hexamer assembles on each DNA strand where it exits the tetramer. Each RuvB hexamer is contacted by two RuvA subunits (via domain III) on 2 adjacent RuvB subunits; this complex drives branch migration. In the full resolvosome a probable DNA-RuvA(4)-RuvB(12)-RuvC(2) complex forms which resolves the HJ.

It localises to the cytoplasm. It carries out the reaction ATP + H2O = ADP + phosphate + H(+). The RuvA-RuvB-RuvC complex processes Holliday junction (HJ) DNA during genetic recombination and DNA repair, while the RuvA-RuvB complex plays an important role in the rescue of blocked DNA replication forks via replication fork reversal (RFR). RuvA specifically binds to HJ cruciform DNA, conferring on it an open structure. The RuvB hexamer acts as an ATP-dependent pump, pulling dsDNA into and through the RuvAB complex. RuvB forms 2 homohexamers on either side of HJ DNA bound by 1 or 2 RuvA tetramers; 4 subunits per hexamer contact DNA at a time. Coordinated motions by a converter formed by DNA-disengaged RuvB subunits stimulates ATP hydrolysis and nucleotide exchange. Immobilization of the converter enables RuvB to convert the ATP-contained energy into a lever motion, pulling 2 nucleotides of DNA out of the RuvA tetramer per ATP hydrolyzed, thus driving DNA branch migration. The RuvB motors rotate together with the DNA substrate, which together with the progressing nucleotide cycle form the mechanistic basis for DNA recombination by continuous HJ branch migration. Branch migration allows RuvC to scan DNA until it finds its consensus sequence, where it cleaves and resolves cruciform DNA. In Geobacter sp. (strain M21), this protein is Holliday junction branch migration complex subunit RuvB.